The chain runs to 471 residues: Glutamyl-tRNA(Gln) amidotransferase subunit A (471 aa).

Residues lysine 66 and serine 141 each act as charge relay system in the active site. Serine 165 serves as the catalytic Acyl-ester intermediate.

The protein belongs to the amidase family. GatA subfamily. In terms of assembly, heterotrimer of A, B and C subunits.

It catalyses the reaction L-glutamyl-tRNA(Gln) + L-glutamine + ATP + H2O = L-glutaminyl-tRNA(Gln) + L-glutamate + ADP + phosphate + H(+). In terms of biological role, allows the formation of correctly charged Gln-tRNA(Gln) through the transamidation of misacylated Glu-tRNA(Gln) in organisms which lack glutaminyl-tRNA synthetase. The reaction takes place in the presence of glutamine and ATP through an activated gamma-phospho-Glu-tRNA(Gln). The sequence is that of Glutamyl-tRNA(Gln) amidotransferase subunit A from Thermus thermophilus (strain ATCC BAA-163 / DSM 7039 / HB27).